The primary structure comprises 211 residues: PDR1 up-regulated protein 1 (211 aa).

Transmembrane regions (helical) follow at residues 45–67 (ISKASVVGAATGLSAGLGGPYAY) and 82–99 (RTILLGVVSMVIMRNVAA).

The protein belongs to the PUP1 family.

It is found in the mitochondrion membrane. Mitochondrial protein that contributes to the enhanced virulence of C.glabrata strains that acquired azole resistance. The protein is PDR1 up-regulated protein 1 of Candida glabrata (strain ATCC 2001 / BCRC 20586 / JCM 3761 / NBRC 0622 / NRRL Y-65 / CBS 138) (Yeast).